Reading from the N-terminus, the 394-residue chain is Deoxyguanosinetriphosphate triphosphohydrolase-like protein (394 aa).

Residues 1–34 (MSSSPFFVPRAPYAEDPAKSRGRRFPEDESRTRT) form a disordered region. Positions 16 to 34 (DPAKSRGRRFPEDESRTRT) are enriched in basic and acidic residues. Positions 70–210 (RLTHSLEVAQ…AALADDIAYN (141 aa)) constitute an HD domain.

It belongs to the dGTPase family. Type 2 subfamily.

The protein is Deoxyguanosinetriphosphate triphosphohydrolase-like protein of Caulobacter sp. (strain K31).